Consider the following 152-residue polypeptide: Flagellar assembly factor FliW (152 aa).

Belongs to the FliW family. As to quaternary structure, interacts with translational regulator CsrA and flagellin(s).

It localises to the cytoplasm. Acts as an anti-CsrA protein, binds CsrA and prevents it from repressing translation of its target genes, one of which is flagellin. Binds to flagellin and participates in the assembly of the flagellum. In Caldicellulosiruptor saccharolyticus (strain ATCC 43494 / DSM 8903 / Tp8T 6331), this protein is Flagellar assembly factor FliW.